Here is a 29-residue protein sequence, read N- to C-terminus: Cytochrome b6-f complex subunit 8 (29 aa).

The chain crosses the membrane as a helical span at residues isoleucine 3–valine 23.

This sequence belongs to the PetN family. As to quaternary structure, the 4 large subunits of the cytochrome b6-f complex are cytochrome b6, subunit IV (17 kDa polypeptide, PetD), cytochrome f and the Rieske protein, while the 4 small subunits are PetG, PetL, PetM and PetN. The complex functions as a dimer.

The protein localises to the cellular thylakoid membrane. Its function is as follows. Component of the cytochrome b6-f complex, which mediates electron transfer between photosystem II (PSII) and photosystem I (PSI), cyclic electron flow around PSI, and state transitions. The chain is Cytochrome b6-f complex subunit 8 from Gloeothece citriformis (strain PCC 7424) (Cyanothece sp. (strain PCC 7424)).